The primary structure comprises 244 residues: MTEAESKTVVPESVLKKRKREEEWALAKKQELEAAKKQNAEKRKLIFNRAKQYSKEYQEKERELIQLKREAKLKGGFYVDPEAKLLFIIRIRGINAIDPKTKKILQLLRLRQIFNGVFLKVNKATINMLRRVEPYVTYGYPNLKSVKELIYKRGFGKLNHQRTALTDNSIVDQGLGKHGIICVEDLIHEIMTVGPHFKEANNFLWPFQLKAPLGGMKKKRNHYVEGGDAGNRENFINELVRRMN.

This sequence belongs to the universal ribosomal protein uL30 family.

This is Large ribosomal subunit protein uL30w (RPL7D) from Arabidopsis thaliana (Mouse-ear cress).